The sequence spans 777 residues: Degenerin unc-8 (777 aa).

The Cytoplasmic portion of the chain corresponds to 1–128 (MSPLLTWNLI…VATSSFFGRY (128 aa)). Residues 129–149 (VWAALFMCMLMAFLLQTYWTM) traverse the membrane as a helical segment. Over 150–689 (SEYLQYRTII…KETAGYTLVN (540 aa)) the chain is Extracellular. N-linked (GlcNAc...) asparagine glycosylation is found at asparagine 274, asparagine 319, asparagine 357, asparagine 411, asparagine 453, asparagine 533, and asparagine 597. A helical transmembrane segment spans residues 690–710 (LFSDFGGNIGLWIGFSVITFA). The Cytoplasmic portion of the chain corresponds to 711–777 (EFAELFCEIC…NESTKELMSK (67 aa)). Positions 752–777 (QRSPKKSQPGEDEVSTNESTKELMSK) are disordered.

The protein belongs to the amiloride-sensitive sodium channel (TC 1.A.6) family.

It is found in the membrane. Functionally, sodium permeable non-voltage-sensitive ion channel. Involved in the activity-dependent removal of selected presynaptic proteins, such as synaptobrevin snb-1, and Ras-related rab-3, in the remodeling of GABAergic motor neurons. In Caenorhabditis elegans, this protein is Degenerin unc-8.